Consider the following 350-residue polypeptide: Protein-glutamate methylesterase/protein-glutamine glutaminase 6 (350 aa).

Residues 11–126 enclose the Response regulatory domain; it reads RVLVVDDSAA…LAPVREELLE (116 aa). A 4-aspartylphosphate modification is found at Asp62. Residues 150 to 347 form the CheB-type methylesterase domain; that stretch reads ELEPARVAVV…ARLVEFARDA (198 aa). Catalysis depends on residues Ser162, His189, and Asp289.

The protein belongs to the CheB family. Post-translationally, phosphorylated by CheA. Phosphorylation of the N-terminal regulatory domain activates the methylesterase activity.

It is found in the cytoplasm. It catalyses the reaction [protein]-L-glutamate 5-O-methyl ester + H2O = L-glutamyl-[protein] + methanol + H(+). It carries out the reaction L-glutaminyl-[protein] + H2O = L-glutamyl-[protein] + NH4(+). Involved in chemotaxis. Part of a chemotaxis signal transduction system that modulates chemotaxis in response to various stimuli. Catalyzes the demethylation of specific methylglutamate residues introduced into the chemoreceptors (methyl-accepting chemotaxis proteins or MCP) by CheR. Also mediates the irreversible deamidation of specific glutamine residues to glutamic acid. The sequence is that of Protein-glutamate methylesterase/protein-glutamine glutaminase 6 from Anaeromyxobacter dehalogenans (strain 2CP-C).